A 299-amino-acid chain; its full sequence is Dihydroorotate dehydrogenase B (NAD(+)), catalytic subunit (299 aa).

FMN-binding positions include serine 19 and 43 to 44 (KS). Substrate is bound by residues lysine 43, 67 to 71 (NAMGL), and asparagine 121. Asparagine 121 lines the FMN pocket. Cysteine 124 serves as the catalytic Nucleophile. 2 residues coordinate FMN: lysine 159 and isoleucine 185. Substrate is bound at residue 186–187 (NT). FMN contacts are provided by residues glycine 211, 237 to 238 (GG), and 259 to 260 (GT).

It belongs to the dihydroorotate dehydrogenase family. Type 1 subfamily. Heterotetramer of 2 PyrK and 2 PyrD type B subunits. FMN is required as a cofactor.

It localises to the cytoplasm. The enzyme catalyses (S)-dihydroorotate + NAD(+) = orotate + NADH + H(+). It functions in the pathway pyrimidine metabolism; UMP biosynthesis via de novo pathway; orotate from (S)-dihydroorotate (NAD(+) route): step 1/1. Functionally, catalyzes the conversion of dihydroorotate to orotate with NAD(+) as electron acceptor. The protein is Dihydroorotate dehydrogenase B (NAD(+)), catalytic subunit (pyrD) of Pyrococcus abyssi (strain GE5 / Orsay).